The sequence spans 171 residues: Adenine phosphoribosyltransferase (171 aa).

Belongs to the purine/pyrimidine phosphoribosyltransferase family. In terms of assembly, homodimer.

It is found in the cytoplasm. It catalyses the reaction AMP + diphosphate = 5-phospho-alpha-D-ribose 1-diphosphate + adenine. Its pathway is purine metabolism; AMP biosynthesis via salvage pathway; AMP from adenine: step 1/1. Catalyzes a salvage reaction resulting in the formation of AMP, that is energically less costly than de novo synthesis. The chain is Adenine phosphoribosyltransferase from Christiangramia forsetii (strain DSM 17595 / CGMCC 1.15422 / KT0803) (Gramella forsetii).